The following is a 3305-amino-acid chain: Apolipophorins (3305 aa).

An N-terminal signal peptide occupies residues 1 to 23 (MGKSNRLLSVLFVISVLWKAAYG). The 602-residue stretch at 39–640 (FAAGQKYNYG…SQTSFLPRSV (602 aa)) folds into the Vitellogenin domain. N-linked (GlcNAc...) asparagine glycans are attached at residues N643 and N2769. The 167-residue stretch at 2733 to 2899 (LRAVVVNGQH…NSYRLSRSCP (167 aa)) folds into the VWFD domain. C2757 and C2898 form a disulfide bridge.

In terms of processing, cleaved into 2 chains by furin protease. However, prevention of cleavage does not impair its function. Post-translationally, N-glycosylated.

The protein resides in the secreted. Constitutes the major component of lipophorin, which mediates transport for various types of lipids in hemolymph. Acts by forming lipoprotein particles that bind lipoproteins and lipids. May be required for morphogens wingless (wg) and hedgehog (hh) function, possibly by acting as vehicles for the movement of wg and hh. This is Apolipophorins from Manduca sexta (Tobacco hawkmoth).